A 1410-amino-acid chain; its full sequence is DNA-directed RNA polymerase subunit beta' (1410 aa).

Zn(2+) is bound by residues C70, C72, C85, and C88. D460, D462, and D464 together coordinate Mg(2+). The Zn(2+) site is built by C814, C888, C895, and C898.

Belongs to the RNA polymerase beta' chain family. The RNAP catalytic core consists of 2 alpha, 1 beta, 1 beta' and 1 omega subunit. When a sigma factor is associated with the core the holoenzyme is formed, which can initiate transcription. Requires Mg(2+) as cofactor. The cofactor is Zn(2+).

The enzyme catalyses RNA(n) + a ribonucleoside 5'-triphosphate = RNA(n+1) + diphosphate. Functionally, DNA-dependent RNA polymerase catalyzes the transcription of DNA into RNA using the four ribonucleoside triphosphates as substrates. The protein is DNA-directed RNA polymerase subunit beta' of Buchnera aphidicola subsp. Cinara cedri (strain Cc).